The sequence spans 267 residues: Tryptophan synthase alpha chain (267 aa).

Active-site proton acceptor residues include Glu-49 and Asp-60.

It belongs to the TrpA family. In terms of assembly, tetramer of two alpha and two beta chains.

It carries out the reaction (1S,2R)-1-C-(indol-3-yl)glycerol 3-phosphate + L-serine = D-glyceraldehyde 3-phosphate + L-tryptophan + H2O. It participates in amino-acid biosynthesis; L-tryptophan biosynthesis; L-tryptophan from chorismate: step 5/5. In terms of biological role, the alpha subunit is responsible for the aldol cleavage of indoleglycerol phosphate to indole and glyceraldehyde 3-phosphate. This Carboxydothermus hydrogenoformans (strain ATCC BAA-161 / DSM 6008 / Z-2901) protein is Tryptophan synthase alpha chain.